The following is a 262-amino-acid chain: Type III pantothenate kinase (262 aa).

9–16 (DIGNTNVK) serves as a coordination point for ATP. Residues Y103 and 110 to 113 (GADR) each bind substrate. D112 (proton acceptor) is an active-site residue. K(+) is bound at residue D134. T137 is an ATP binding site. T190 contributes to the substrate binding site.

Belongs to the type III pantothenate kinase family. As to quaternary structure, homodimer. NH4(+) is required as a cofactor. Requires K(+) as cofactor.

It is found in the cytoplasm. The enzyme catalyses (R)-pantothenate + ATP = (R)-4'-phosphopantothenate + ADP + H(+). It functions in the pathway cofactor biosynthesis; coenzyme A biosynthesis; CoA from (R)-pantothenate: step 1/5. In terms of biological role, catalyzes the phosphorylation of pantothenate (Pan), the first step in CoA biosynthesis. This chain is Type III pantothenate kinase, found in Nitratidesulfovibrio vulgaris (strain ATCC 29579 / DSM 644 / CCUG 34227 / NCIMB 8303 / VKM B-1760 / Hildenborough) (Desulfovibrio vulgaris).